A 921-amino-acid polypeptide reads, in one-letter code: DNA ligase (921 aa).

Residues 90-94 (DAAYD), 139-140 (SL), and Glu-173 contribute to the NAD(+) site. The N6-AMP-lysine intermediate role is filled by Lys-175. Positions 196, 235, 360, and 384 each coordinate NAD(+). Zn(2+) contacts are provided by Cys-481, Cys-484, Cys-500, and Cys-506. Positions 663 to 688 (EAAIESAETQGGAASETTGAPTGAEA) are disordered. A BRCT domain is found at 839–921 (SLPQTLAGKT…AQLLETGSID (83 aa)).

It belongs to the NAD-dependent DNA ligase family. LigA subfamily. Mg(2+) serves as cofactor. The cofactor is Mn(2+).

The enzyme catalyses NAD(+) + (deoxyribonucleotide)n-3'-hydroxyl + 5'-phospho-(deoxyribonucleotide)m = (deoxyribonucleotide)n+m + AMP + beta-nicotinamide D-nucleotide.. Its function is as follows. DNA ligase that catalyzes the formation of phosphodiester linkages between 5'-phosphoryl and 3'-hydroxyl groups in double-stranded DNA using NAD as a coenzyme and as the energy source for the reaction. It is essential for DNA replication and repair of damaged DNA. This chain is DNA ligase, found in Bifidobacterium longum subsp. infantis (strain ATCC 15697 / DSM 20088 / JCM 1222 / NCTC 11817 / S12).